Reading from the N-terminus, the 233-residue chain is Orotidine 5'-phosphate decarboxylase (233 aa).

Residues Asp-11, Lys-34, 61 to 70 (DLKLHDIPNT), Thr-117, Arg-179, Gln-188, Gly-208, and Arg-209 each bind substrate. The active-site Proton donor is Lys-63.

The protein belongs to the OMP decarboxylase family. Type 1 subfamily. As to quaternary structure, homodimer.

The catalysed reaction is orotidine 5'-phosphate + H(+) = UMP + CO2. Its pathway is pyrimidine metabolism; UMP biosynthesis via de novo pathway; UMP from orotate: step 2/2. Functionally, catalyzes the decarboxylation of orotidine 5'-monophosphate (OMP) to uridine 5'-monophosphate (UMP). This Streptococcus pneumoniae serotype 4 (strain ATCC BAA-334 / TIGR4) protein is Orotidine 5'-phosphate decarboxylase.